Reading from the N-terminus, the 191-residue chain is Ankyrin repeat domain-containing protein 22 (191 aa).

ANK repeat units lie at residues 39 to 68, 72 to 100, 101 to 130, and 134 to 163; these read NGDT…DVNL, KERT…MPVL, LIGY…EVNA, and DGYT…DPMI.

This Mus musculus (Mouse) protein is Ankyrin repeat domain-containing protein 22 (Ankrd22).